We begin with the raw amino-acid sequence, 111 residues long: BET1-like protein (111 aa).

Residues 1-86 (MADWARAQSP…MARSGRDNRK (86 aa)) lie on the Cytoplasmic side of the membrane. Serine 9 and serine 37 each carry phosphoserine. Residues 15–77 (EILDRENKRM…TGSVKRFSTM (63 aa)) enclose the t-SNARE coiled-coil homology domain. Residues 87–107 (LLCGMAVGLIVAFFILSYFLS) form a helical; Anchor for type IV membrane protein membrane-spanning segment. Residues 108-111 (RART) lie on the Lumenal side of the membrane.

In terms of assembly, component of a SNARE complex consisting of STX5, YKT6, GOSR1 and BET1L. Interacts with STX5.

The protein localises to the golgi apparatus membrane. It is found in the golgi apparatus. The protein resides in the trans-Golgi network membrane. Functionally, vesicle SNARE required for targeting and fusion of retrograde transport vesicles with the Golgi complex. Required for the integrity of the Golgi complex. This is BET1-like protein from Pongo abelii (Sumatran orangutan).